A 156-amino-acid polypeptide reads, in one-letter code: ATP synthase subunit b (156 aa).

Residues 12 to 32 (IAFAIFVLFCMKFIWPALMGA) form a helical membrane-spanning segment.

It belongs to the ATPase B chain family. F-type ATPases have 2 components, F(1) - the catalytic core - and F(0) - the membrane proton channel. F(1) has five subunits: alpha(3), beta(3), gamma(1), delta(1), epsilon(1). F(0) has three main subunits: a(1), b(2) and c(10-14). The alpha and beta chains form an alternating ring which encloses part of the gamma chain. F(1) is attached to F(0) by a central stalk formed by the gamma and epsilon chains, while a peripheral stalk is formed by the delta and b chains.

It localises to the cell inner membrane. Its function is as follows. F(1)F(0) ATP synthase produces ATP from ADP in the presence of a proton or sodium gradient. F-type ATPases consist of two structural domains, F(1) containing the extramembraneous catalytic core and F(0) containing the membrane proton channel, linked together by a central stalk and a peripheral stalk. During catalysis, ATP synthesis in the catalytic domain of F(1) is coupled via a rotary mechanism of the central stalk subunits to proton translocation. In terms of biological role, component of the F(0) channel, it forms part of the peripheral stalk, linking F(1) to F(0). This is ATP synthase subunit b from Psychrobacter sp. (strain PRwf-1).